The chain runs to 351 residues: Peptide chain release factor 1 (351 aa).

An N5-methylglutamine modification is found at Q229.

This sequence belongs to the prokaryotic/mitochondrial release factor family. In terms of processing, methylated by PrmC. Methylation increases the termination efficiency of RF1.

The protein resides in the cytoplasm. In terms of biological role, peptide chain release factor 1 directs the termination of translation in response to the peptide chain termination codons UAG and UAA. This chain is Peptide chain release factor 1, found in Cereibacter sphaeroides (strain ATCC 17029 / ATH 2.4.9) (Rhodobacter sphaeroides).